A 257-amino-acid polypeptide reads, in one-letter code: 3-deoxy-manno-octulosonate cytidylyltransferase (257 aa).

The protein belongs to the KdsB family.

Its subcellular location is the cytoplasm. The catalysed reaction is 3-deoxy-alpha-D-manno-oct-2-ulosonate + CTP = CMP-3-deoxy-beta-D-manno-octulosonate + diphosphate. Its pathway is nucleotide-sugar biosynthesis; CMP-3-deoxy-D-manno-octulosonate biosynthesis; CMP-3-deoxy-D-manno-octulosonate from 3-deoxy-D-manno-octulosonate and CTP: step 1/1. It participates in bacterial outer membrane biogenesis; lipopolysaccharide biosynthesis. Its function is as follows. Activates KDO (a required 8-carbon sugar) for incorporation into bacterial lipopolysaccharide in Gram-negative bacteria. This is 3-deoxy-manno-octulosonate cytidylyltransferase from Halorhodospira halophila (strain DSM 244 / SL1) (Ectothiorhodospira halophila (strain DSM 244 / SL1)).